Consider the following 456-residue polypeptide: UDP-N-acetylmuramoylalanine--D-glutamate ligase (456 aa).

Residue 119 to 125 (GSNGKTT) coordinates ATP.

Belongs to the MurCDEF family.

Its subcellular location is the cytoplasm. The catalysed reaction is UDP-N-acetyl-alpha-D-muramoyl-L-alanine + D-glutamate + ATP = UDP-N-acetyl-alpha-D-muramoyl-L-alanyl-D-glutamate + ADP + phosphate + H(+). It participates in cell wall biogenesis; peptidoglycan biosynthesis. Cell wall formation. Catalyzes the addition of glutamate to the nucleotide precursor UDP-N-acetylmuramoyl-L-alanine (UMA). The polypeptide is UDP-N-acetylmuramoylalanine--D-glutamate ligase (Limosilactobacillus reuteri (strain DSM 20016) (Lactobacillus reuteri)).